The following is a 105-amino-acid chain: UPF0145 protein Ping_0381 (105 aa).

Belongs to the UPF0145 family.

The chain is UPF0145 protein Ping_0381 from Psychromonas ingrahamii (strain DSM 17664 / CCUG 51855 / 37).